A 297-amino-acid polypeptide reads, in one-letter code: Small ribosomal subunit biogenesis GTPase RsgA (297 aa).

A CP-type G domain is found at 65–223 (TNEIGRPAVA…IADTPGFSAI (159 aa)). GTP is bound by residues 114–117 (SKAD) and 166–174 (GQSGAGKST). Residues C247, C252, H254, and C260 each coordinate Zn(2+).

Belongs to the TRAFAC class YlqF/YawG GTPase family. RsgA subfamily. As to quaternary structure, monomer. Associates with 30S ribosomal subunit, binds 16S rRNA. Requires Zn(2+) as cofactor.

It is found in the cytoplasm. One of several proteins that assist in the late maturation steps of the functional core of the 30S ribosomal subunit. Helps release RbfA from mature subunits. May play a role in the assembly of ribosomal proteins into the subunit. Circularly permuted GTPase that catalyzes slow GTP hydrolysis, GTPase activity is stimulated by the 30S ribosomal subunit. The chain is Small ribosomal subunit biogenesis GTPase RsgA from Lactobacillus gasseri (strain ATCC 33323 / DSM 20243 / BCRC 14619 / CIP 102991 / JCM 1131 / KCTC 3163 / NCIMB 11718 / NCTC 13722 / AM63).